Here is a 319-residue protein sequence, read N- to C-terminus: Acetyl esterase (319 aa).

The short motif at 91–93 (HGG) is the Involved in the stabilization of the negatively charged intermediate by the formation of the oxyanion hole element. Residues Ser-165, Asp-262, and His-292 contribute to the active site.

It belongs to the 'GDXG' lipolytic enzyme family. Homodimer. Interacts with MalT and MelA.

It localises to the cytoplasm. Functionally, displays esterase activity towards short chain fatty esters (acyl chain length of up to 8 carbons). Able to hydrolyze triacetylglycerol (triacetin) and tributyrylglycerol (tributyrin), but not trioleylglycerol (triolein) or cholesterol oleate. Negatively regulates MalT activity by antagonizing maltotriose binding. Inhibits MelA galactosidase activity. This is Acetyl esterase from Shigella flexneri.